The following is a 475-amino-acid chain: Ribulose bisphosphate carboxylase large chain (475 aa).

A propeptide spanning residues 1 to 2 is cleaved from the precursor; sequence MS. Residue P3 is modified to N-acetylproline. K14 bears the N6,N6,N6-trimethyllysine mark. Substrate is bound by residues N123 and T173. The Proton acceptor role is filled by K175. Residue K177 coordinates substrate. Mg(2+) contacts are provided by K201, D203, and E204. K201 is subject to N6-carboxylysine. H294 (proton acceptor) is an active-site residue. Substrate contacts are provided by R295, H327, and S379.

This sequence belongs to the RuBisCO large chain family. Type I subfamily. Heterohexadecamer of 8 large chains and 8 small chains; disulfide-linked. The disulfide link is formed within the large subunit homodimers. It depends on Mg(2+) as a cofactor. The disulfide bond which can form in the large chain dimeric partners within the hexadecamer appears to be associated with oxidative stress and protein turnover.

It is found in the plastid. It localises to the chloroplast. The catalysed reaction is 2 (2R)-3-phosphoglycerate + 2 H(+) = D-ribulose 1,5-bisphosphate + CO2 + H2O. The enzyme catalyses D-ribulose 1,5-bisphosphate + O2 = 2-phosphoglycolate + (2R)-3-phosphoglycerate + 2 H(+). Functionally, ruBisCO catalyzes two reactions: the carboxylation of D-ribulose 1,5-bisphosphate, the primary event in carbon dioxide fixation, as well as the oxidative fragmentation of the pentose substrate in the photorespiration process. Both reactions occur simultaneously and in competition at the same active site. This is Ribulose bisphosphate carboxylase large chain from Spirogyra maxima (Green alga).